The sequence spans 119 residues: Putative membrane protein insertion efficiency factor (119 aa).

This sequence belongs to the UPF0161 family.

Its subcellular location is the cell inner membrane. Could be involved in insertion of integral membrane proteins into the membrane. The protein is Putative membrane protein insertion efficiency factor of Brucella anthropi (strain ATCC 49188 / DSM 6882 / CCUG 24695 / JCM 21032 / LMG 3331 / NBRC 15819 / NCTC 12168 / Alc 37) (Ochrobactrum anthropi).